We begin with the raw amino-acid sequence, 754 residues long: Probable TonB-dependent siderophore receptor PirA (754 aa).

The first 24 residues, 1–24, serve as a signal peptide directing secretion; the sequence is MSKRIIQSVLSVSVLASMMSMAFA. Positions 54–181 constitute a TBDR plug domain; sequence EQVKQSLGVS…AGGVVNIITK (128 aa). One can recognise a TBDR beta-barrel domain in the interval 186 to 754; it reads ETHGSVEFYT…AYYASLKYSF (569 aa). Residues 404–414 are compositionally biased toward polar residues; it reads VSTTQGKDSSG. Residues 404–424 are disordered; that stretch reads VSTTQGKDSSGSGYGDQLAKG. Cysteines 511 and 519 form a disulfide. The TonB C-terminal box signature appears at 737 to 754; that stretch reads QTYNEPGRAYYASLKYSF.

This sequence belongs to the TonB-dependent receptor family.

The protein localises to the cell outer membrane. Probably involved in the initial step of iron uptake by binding iron chelating siderophores, thereby allowing extraction of iron from the environment. May bind the siderophore, ferric enterobactin, with micromolar affinity. The polypeptide is Probable TonB-dependent siderophore receptor PirA (Acinetobacter baumannii (strain ATCC 19606 / DSM 30007 / JCM 6841 / CCUG 19606 / CIP 70.34 / NBRC 109757 / NCIMB 12457 / NCTC 12156 / 81)).